Here is a 148-residue protein sequence, read N- to C-terminus: Large ribosomal subunit protein bL9 (148 aa).

This sequence belongs to the bacterial ribosomal protein bL9 family.

Functionally, binds to the 23S rRNA. The chain is Large ribosomal subunit protein bL9 from Salinispora arenicola (strain CNS-205).